Here is a 466-residue protein sequence, read N- to C-terminus: 3-isopropylmalate dehydratase large subunit (466 aa).

Positions 347, 407, and 410 each coordinate [4Fe-4S] cluster.

The protein belongs to the aconitase/IPM isomerase family. LeuC type 1 subfamily. As to quaternary structure, heterodimer of LeuC and LeuD. [4Fe-4S] cluster is required as a cofactor.

It carries out the reaction (2R,3S)-3-isopropylmalate = (2S)-2-isopropylmalate. It functions in the pathway amino-acid biosynthesis; L-leucine biosynthesis; L-leucine from 3-methyl-2-oxobutanoate: step 2/4. Functionally, catalyzes the isomerization between 2-isopropylmalate and 3-isopropylmalate, via the formation of 2-isopropylmaleate. The chain is 3-isopropylmalate dehydratase large subunit from Vibrio campbellii (strain ATCC BAA-1116).